The following is a 49-amino-acid chain: Large ribosomal subunit protein bL33B (49 aa).

It belongs to the bacterial ribosomal protein bL33 family.

The chain is Large ribosomal subunit protein bL33B (rpmGB) from Bacillus licheniformis.